A 380-amino-acid chain; its full sequence is Cytochrome b (380 aa).

Helical transmembrane passes span 33–53, 77–98, 113–133, and 178–198; these read FGSL…FLAM, WLIR…YMHI, WNIG…GYVL, and FFAF…LHLL. Histidine 83 and histidine 97 together coordinate heme b. Residues histidine 182 and histidine 196 each contribute to the heme b site. Histidine 201 provides a ligand contact to a ubiquinone. 4 helical membrane passes run 226–246, 288–308, 320–340, and 347–367; these read YKDL…ALFA, LGGV…PILH, LTQF…WIGG, and FIII…VLAP.

This sequence belongs to the cytochrome b family. In terms of assembly, the cytochrome bc1 complex contains 3 respiratory subunits (MT-CYB, CYC1 and UQCRFS1), 2 core proteins (UQCRC1 and UQCRC2) and probably 6 low-molecular weight proteins. Heme b is required as a cofactor.

It localises to the mitochondrion inner membrane. Functionally, component of the ubiquinol-cytochrome c reductase complex (complex III or cytochrome b-c1 complex) that is part of the mitochondrial respiratory chain. The b-c1 complex mediates electron transfer from ubiquinol to cytochrome c. Contributes to the generation of a proton gradient across the mitochondrial membrane that is then used for ATP synthesis. The protein is Cytochrome b (mt-cyb) of Salmo salar (Atlantic salmon).